The chain runs to 138 residues: Cellular retinoic acid-binding protein 2 (138 aa).

Residues 21 to 31 (KVLGVNVMLRK) carry the Nuclear localization signal motif. A Glycyl lysine isopeptide (Lys-Gly) (interchain with G-Cter in SUMO) cross-link involves residue K102. 133–135 (RVY) is a binding site for all-trans-retinoate.

Belongs to the calycin superfamily. Fatty-acid binding protein (FABP) family. As to quaternary structure, interacts with importin alpha, RXR and RARA. Sumoylated in response to retinoic acid binding, sumoylation is critical for dissociation from ER and subsequent nuclear translocation.

It localises to the cytoplasm. It is found in the endoplasmic reticulum. The protein localises to the nucleus. In terms of biological role, transports retinoic acid to the nucleus. Regulates the access of retinoic acid to the nuclear retinoic acid receptors. This chain is Cellular retinoic acid-binding protein 2 (CRABP2), found in Bos taurus (Bovine).